The chain runs to 691 residues: Proprotein convertase subtilisin/kexin type 9 (691 aa).

Residues 1–29 form the signal peptide; the sequence is MGTVSSRRLWWPLPLLLLLLLLGPAGARA. The propeptide occupies 30–151; it reads QEDDDGDYEE…IEEDSSVFAQ (122 aa). Tyr37 carries the post-translational modification Sulfotyrosine. Residue Ser46 is modified to Phosphoserine. Residues 76–148 form the Inhibitor I9 domain; the sequence is TYVVVLKEET…VDYIEEDSSV (73 aa). The Peptidase S8 domain occupies 154–460; the sequence is PWNLERITPA…GWQLFCRTVW (307 aa). Catalysis depends on charge relay system residues Asp185 and His225. Disulfide bonds link Cys222–Cys254 and Cys322–Cys357. Ser385 (charge relay system) is an active-site residue. The tract at residues 449–691 is C-terminal domain; that stretch reads GAGWQLFCRT…HLAQASQELQ (243 aa). Intrachain disulfides connect Cys456-Cys526, Cys476-Cys525, and Cys485-Cys508. Asn532 carries N-linked (GlcNAc...) asparagine glycosylation. 6 disulfide bridges follow: Cys533/Cys600, Cys551/Cys599, Cys561/Cys587, Cys607/Cys678, Cys625/Cys677, and Cys634/Cys653. Ser687 is modified (phosphoserine).

Belongs to the peptidase S8 family. As to quaternary structure, monomer. Can self-associate to form dimers and higher multimers which may have increased LDLR degrading activity. The precursor protein but not the mature protein may form multimers. Interacts with APOB, VLDLR, LRP8/APOER2 and BACE1. The full-length immature form (pro-PCSK9) interacts with SCNN1A, SCNN1B and SCNN1G. The pro-PCSK9 form (via C-terminal domain) interacts with LDLR. Interacts (via the C-terminal domain) with ANXA2 (via repeat Annexin 1); the interaction inhibits the degradation of LDLR. It depends on Ca(2+) as a cofactor. Post-translationally, cleavage by furin and PCSK5 generates a truncated inactive protein that is unable to induce LDLR degradation. In terms of processing, undergoes autocatalytic cleavage in the endoplasmic reticulum to release the propeptide from the N-terminus and the cleavage of the propeptide is strictly required for its maturation and activation. The cleaved propeptide however remains associated with the catalytic domain through non-covalent interactions, preventing potential substrates from accessing its active site. As a result, it is secreted from cells as a propeptide-containing, enzymatically inactive protein. Phosphorylation protects the propeptide against proteolysis.

It is found in the cytoplasm. Its subcellular location is the secreted. It localises to the endosome. The protein resides in the lysosome. The protein localises to the cell surface. It is found in the endoplasmic reticulum. Its subcellular location is the golgi apparatus. With respect to regulation, its proteolytic activity is autoinhibited by the non-covalent binding of the propeptide to the catalytic domain. Inhibited by EGTA. Functionally, crucial player in the regulation of plasma cholesterol homeostasis. Binds to low-density lipid receptor family members: low density lipoprotein receptor (LDLR), very low density lipoprotein receptor (VLDLR), apolipoprotein E receptor (LRP1/APOER) and apolipoprotein receptor 2 (LRP8/APOER2), and promotes their degradation in intracellular acidic compartments. Acts via a non-proteolytic mechanism to enhance the degradation of the hepatic LDLR through a clathrin LDLRAP1/ARH-mediated pathway. May prevent the recycling of LDLR from endosomes to the cell surface or direct it to lysosomes for degradation. Can induce ubiquitination of LDLR leading to its subsequent degradation. Inhibits intracellular degradation of APOB via the autophagosome/lysosome pathway in a LDLR-independent manner. Involved in the disposal of non-acetylated intermediates of BACE1 in the early secretory pathway. Inhibits epithelial Na(+) channel (ENaC)-mediated Na(+) absorption by reducing ENaC surface expression primarily by increasing its proteasomal degradation. Regulates neuronal apoptosis via modulation of LRP8/APOER2 levels and related anti-apoptotic signaling pathways. This Saimiri boliviensis boliviensis (Bolivian squirrel monkey) protein is Proprotein convertase subtilisin/kexin type 9 (PCSK9).